The sequence spans 273 residues: Undecaprenyl-diphosphatase (273 aa).

Helical transmembrane passes span Ser-6 to Ser-26, Ala-45 to Trp-65, Leu-90 to His-110, Leu-116 to Ala-136, Tyr-190 to Leu-210, Gly-222 to Ile-242, and Ile-252 to Phe-272.

This sequence belongs to the UppP family.

The protein resides in the cell inner membrane. It carries out the reaction di-trans,octa-cis-undecaprenyl diphosphate + H2O = di-trans,octa-cis-undecaprenyl phosphate + phosphate + H(+). Catalyzes the dephosphorylation of undecaprenyl diphosphate (UPP). Confers resistance to bacitracin. The protein is Undecaprenyl-diphosphatase of Escherichia coli O157:H7.